Here is a 380-residue protein sequence, read N- to C-terminus: Phospho-N-acetylmuramoyl-pentapeptide-transferase (380 aa).

A run of 11 helical transmembrane segments spans residues 26–46, 75–95, 98–118, 135–155, 161–181, 183–203, 222–242, 259–279, 283–303, 311–331, and 357–377; these read IVAA…IFIE, MGGA…ADLA, FVWA…TDDW, LVLQ…DWRF, FPWV…FVPS, LFNP…VIAT, VVSA…IAGF, LGVF…YNTY, VFMG…MAVL, AILH…VWSF, and KIIV…LLSI.

The protein belongs to the glycosyltransferase 4 family. MraY subfamily. It depends on Mg(2+) as a cofactor.

The protein resides in the cell inner membrane. The catalysed reaction is UDP-N-acetyl-alpha-D-muramoyl-L-alanyl-gamma-D-glutamyl-meso-2,6-diaminopimeloyl-D-alanyl-D-alanine + di-trans,octa-cis-undecaprenyl phosphate = di-trans,octa-cis-undecaprenyl diphospho-N-acetyl-alpha-D-muramoyl-L-alanyl-D-glutamyl-meso-2,6-diaminopimeloyl-D-alanyl-D-alanine + UMP. Its pathway is cell wall biogenesis; peptidoglycan biosynthesis. Catalyzes the initial step of the lipid cycle reactions in the biosynthesis of the cell wall peptidoglycan: transfers peptidoglycan precursor phospho-MurNAc-pentapeptide from UDP-MurNAc-pentapeptide onto the lipid carrier undecaprenyl phosphate, yielding undecaprenyl-pyrophosphoryl-MurNAc-pentapeptide, known as lipid I. This is Phospho-N-acetylmuramoyl-pentapeptide-transferase from Anaeromyxobacter dehalogenans (strain 2CP-1 / ATCC BAA-258).